The chain runs to 205 residues: Holliday junction branch migration complex subunit RuvA (205 aa).

Residues 1-64 are domain I; it reads MIGKLRGLID…EDQIKLFGFR (64 aa). Residues 65 to 143 form a domain II region; sequence SDVEREWFRL…AFANVDPGVV (79 aa). Residues 144 to 154 are flexible linker; that stretch reads RLSGAIEESRA. Positions 154-205 are domain III; the sequence is APQPVADAISALINLGYGQPQAAAAIAAASRAAGDKAETAQLIRLGLKELAK.

Belongs to the RuvA family. Homotetramer. Forms an RuvA(8)-RuvB(12)-Holliday junction (HJ) complex. HJ DNA is sandwiched between 2 RuvA tetramers; dsDNA enters through RuvA and exits via RuvB. An RuvB hexamer assembles on each DNA strand where it exits the tetramer. Each RuvB hexamer is contacted by two RuvA subunits (via domain III) on 2 adjacent RuvB subunits; this complex drives branch migration. In the full resolvosome a probable DNA-RuvA(4)-RuvB(12)-RuvC(2) complex forms which resolves the HJ.

The protein resides in the cytoplasm. In terms of biological role, the RuvA-RuvB-RuvC complex processes Holliday junction (HJ) DNA during genetic recombination and DNA repair, while the RuvA-RuvB complex plays an important role in the rescue of blocked DNA replication forks via replication fork reversal (RFR). RuvA specifically binds to HJ cruciform DNA, conferring on it an open structure. The RuvB hexamer acts as an ATP-dependent pump, pulling dsDNA into and through the RuvAB complex. HJ branch migration allows RuvC to scan DNA until it finds its consensus sequence, where it cleaves and resolves the cruciform DNA. This is Holliday junction branch migration complex subunit RuvA from Bradyrhizobium sp. (strain ORS 278).